A 267-amino-acid polypeptide reads, in one-letter code: C-type lectin domain family 12 member A (267 aa).

The Cytoplasmic segment spans residues 1 to 43 (MSEEIVYANLKIQDPDKKEETQKSDKCGGKVSADASHSQQKTV). An ITIM motif motif is present at residues 5 to 10 (IVYANL). Phosphotyrosine is present on tyrosine 7. A helical; Signal-anchor for type II membrane protein transmembrane segment spans residues 44-64 (LILILLCLLLFIGMGVLGGIF). Residues 65 to 267 (YTTLATEMIK…VLNGLPEDSR (203 aa)) are Extracellular-facing. Residues asparagine 98 and asparagine 105 are each glycosylated (N-linked (GlcNAc...) asparagine). 4 cysteine pairs are disulfide-bonded: cysteine 118–cysteine 130, cysteine 133–cysteine 144, cysteine 161–cysteine 246, and cysteine 225–cysteine 238. Positions 140–247 (YKDSCYSQLN…CTDENNIICE (108 aa)) constitute a C-type lectin domain. The N-linked (GlcNAc...) asparagine glycan is linked to asparagine 165.

Homodimer; disulfide-linked. Interacts (when the ITIM motif is phosphorylated) with PTPN6 and PTPN11. Phosphorylated at Tyr-7 by SRC in the ITIM motif following ligand-binding, promoting recruitment of tyrosine-protein phosphatases PTPN6 and PTPN11. As to expression, mainly expressed in lymphoid tissues. Preferentially expressed in peripheral blood leukocytes; less frequent in thymus, spleen, heart, brain and lung; and undetectable in other tissues.

Its subcellular location is the cell membrane. Myeloid inhibitory C-type lectin receptor that acts as a negative regulator of myeloid cell activation. Myeloid cell inhibition is required to limit proinflammatory pathways and protect against excessive inflammation. Specifically recognizes and binds various structures, such as neutrophil extracellular traps (NETs) or monosodium urate crystals. Also acts as a pattern-recognition receptor for pathogen-associated molecules, such as plasmodium hemozoin or mycobacterial micolic acid. Ligand-binding induces phosphorylation of its ITIM motif, followed by recruitment of tyrosine-protein phosphatases PTPN6 and PTPN11, which counteract tyrosine-protein kinase SYK, thereby preventing myeloid cell activation. Acts as a pattern-recognition receptor for NETs in neutrophils: specifically recognizes DNA in NETs, leading to inhibit neutrophil activation and limit further NET formation. This regulation is essential for controlling key neutrophil responses and limit NET-mediated inflammatory conditions. Also recognizes dead cells by acting as a receptor for monosodium urate crystals, leading to down-regulate neutrophil activation. Binding to monosodium urate crystals also promotes the type I interferon response. Acts as an inhibitor of natural killer (NK) cell cytotoxicity. Also acts as an ihibitor of dendritic cell maturation in an IL10-dependent manner. In Mus musculus (Mouse), this protein is C-type lectin domain family 12 member A.